The chain runs to 515 residues: MAEAKNRVCLVVIDGWGISNETKGNAILNAKTPVMDELCVMNSHPIQAHGLHVGLPEGLMGNSEVGHLNIGAGRVVYQDIVRINLAVKNKTLVENKHLKEAAERAIKGNGRMHLCGLVSDGGVHSHIDHLFALITALKQLKVPKLYIQFFGDGRDTSPTSGVGFLQQLIDFVNKEQYGEISTIVGRYYAMDRDKRWERIRVCYDALIGGVGEKTTIDKAIDVIKGRYAKDETDEFLKPIILSDEGRTKDGDTLIFFDYRADRMREITECMGMERYKDLNSNIKHPKNMQVIGMTQYKAEFTFPALFPPESHKNVLAEWLSVNGLTQFHCAETEKYAHVTFFFNGGVEKQFANEERCLVVSPKVATYDLEPPMSSAAVADKVIEQLHMKKHPFVMCNFAPPDMVGHTGVYEAAVKAVEATDIAIGRIYEACKKNDYILMVTADHGNAEKMMAPDGSKHTAHTCNLVPFTCSSMKYKFMDKLPDREMALCDVAPTVLKVMGVPLPSEMTGQPLVNEA.

Mn(2+) contacts are provided by aspartate 14 and serine 63. Residue serine 63 is part of the active site. Residues histidine 124, 154-155, arginine 186, arginine 192, 259-262, and lysine 334 each bind substrate; these read RD and RADR. Residues aspartate 401, histidine 405, aspartate 442, histidine 443, and histidine 460 each coordinate Mn(2+).

The protein belongs to the BPG-independent phosphoglycerate mutase family. Mg(2+) serves as cofactor. It depends on Mn(2+) as a cofactor.

It catalyses the reaction (2R)-2-phosphoglycerate = (2R)-3-phosphoglycerate. It participates in carbohydrate degradation; glycolysis; pyruvate from D-glyceraldehyde 3-phosphate: step 3/5. Its activity is regulated as follows. Activity is not affected by 2,3-bisphosphoglycerate. Functionally, catalyzes the interconversion of 2-phosphoglycerate and 3-phosphoglycerate. The protein is 2,3-bisphosphoglycerate-independent phosphoglycerate mutase of Brugia malayi (Filarial nematode worm).